Here is a 138-residue protein sequence, read N- to C-terminus: SPbeta prophage-derived uncharacterized protein YopJ (138 aa).

The sequence is that of SPbeta prophage-derived uncharacterized protein YopJ (yopJ) from Bacillus subtilis (strain 168).